Consider the following 398-residue polypeptide: MKVYDLPDSHGHFGPYGGIFVAETLISALEDLRIQYERYRSDADFQAEFAHELKHYVGRPTPIYHAKRWSAQLGGAQILLKREDLNHTGAHKINNAMGQALLARRMGKSRVIAETGAGQHGVATATVAARYGMECVIYMGSVDVERQAANVYRMKLLGAEVIPVESGSRTLKDALNEAMRDWVTNVADTFYIIGTVAGPHPYPMMVRDFQAIIGREAITQMQEDYGRQPDALIACVGGGSNAIGLFYPYLDSSIRMIGVEAAGHGVETDQHAATLTKGRPGVLHGNRTYLIQDENGQIVETHSISAGLDYPGVGPEHAWLKDSGRAEYFGITDEQALEAFHALCHYEGIIPALESSHALAYAARLAPALTSDKLLLVNLSGRGDKDMPTVARASHITF.

Lys92 is modified (N6-(pyridoxal phosphate)lysine).

It belongs to the TrpB family. In terms of assembly, tetramer of two alpha and two beta chains. The cofactor is pyridoxal 5'-phosphate.

The catalysed reaction is (1S,2R)-1-C-(indol-3-yl)glycerol 3-phosphate + L-serine = D-glyceraldehyde 3-phosphate + L-tryptophan + H2O. Its pathway is amino-acid biosynthesis; L-tryptophan biosynthesis; L-tryptophan from chorismate: step 5/5. The beta subunit is responsible for the synthesis of L-tryptophan from indole and L-serine. The chain is Tryptophan synthase beta chain from Nitrosospira multiformis (strain ATCC 25196 / NCIMB 11849 / C 71).